The primary structure comprises 358 residues: 3-dehydroquinate synthase (358 aa).

Residues 102–106 (GVVGD), 126–127 (TT), Lys139, and Lys148 contribute to the NAD(+) site. Zn(2+)-binding residues include Glu181, His244, and His260.

Belongs to the sugar phosphate cyclases superfamily. Dehydroquinate synthase family. The cofactor is Co(2+). Zn(2+) serves as cofactor. Requires NAD(+) as cofactor.

It is found in the cytoplasm. The catalysed reaction is 7-phospho-2-dehydro-3-deoxy-D-arabino-heptonate = 3-dehydroquinate + phosphate. It functions in the pathway metabolic intermediate biosynthesis; chorismate biosynthesis; chorismate from D-erythrose 4-phosphate and phosphoenolpyruvate: step 2/7. Its function is as follows. Catalyzes the conversion of 3-deoxy-D-arabino-heptulosonate 7-phosphate (DAHP) to dehydroquinate (DHQ). This Symbiobacterium thermophilum (strain DSM 24528 / JCM 14929 / IAM 14863 / T) protein is 3-dehydroquinate synthase.